The chain runs to 754 residues: 5-methyltetrahydropteroyltriglutamate--homocysteine methyltransferase (754 aa).

5-methyltetrahydropteroyltri-L-glutamate is bound by residues 17 to 20 (RELK) and lysine 117. Residues 431–433 (IGS) and glutamate 484 contribute to the L-homocysteine site. L-methionine contacts are provided by residues 431–433 (IGS) and glutamate 484. Residues 515-516 (RC) and tryptophan 561 each bind 5-methyltetrahydropteroyltri-L-glutamate. Aspartate 599 lines the L-homocysteine pocket. Aspartate 599 serves as a coordination point for L-methionine. Glutamate 605 is a 5-methyltetrahydropteroyltri-L-glutamate binding site. Histidine 641, cysteine 643, and glutamate 665 together coordinate Zn(2+). Catalysis depends on histidine 694, which acts as the Proton donor. Residue cysteine 726 participates in Zn(2+) binding.

It belongs to the vitamin-B12 independent methionine synthase family. Zn(2+) is required as a cofactor.

The catalysed reaction is 5-methyltetrahydropteroyltri-L-glutamate + L-homocysteine = tetrahydropteroyltri-L-glutamate + L-methionine. Its pathway is amino-acid biosynthesis; L-methionine biosynthesis via de novo pathway; L-methionine from L-homocysteine (MetE route): step 1/1. Its function is as follows. Catalyzes the transfer of a methyl group from 5-methyltetrahydrofolate to homocysteine resulting in methionine formation. In Salmonella choleraesuis (strain SC-B67), this protein is 5-methyltetrahydropteroyltriglutamate--homocysteine methyltransferase.